We begin with the raw amino-acid sequence, 158 residues long: 2-C-methyl-D-erythritol 2,4-cyclodiphosphate synthase (158 aa).

Residues aspartate 9 and histidine 11 each contribute to the a divalent metal cation site. 4-CDP-2-C-methyl-D-erythritol 2-phosphate-binding positions include 9-11 (DVH) and 35-36 (HS). Histidine 43 is a binding site for a divalent metal cation. 4-CDP-2-C-methyl-D-erythritol 2-phosphate contacts are provided by residues 57–59 (DIG), 62–66 (FPDTD), 133–136 (TTTE), phenylalanine 140, and arginine 143.

This sequence belongs to the IspF family. Homotrimer. A divalent metal cation serves as cofactor.

It catalyses the reaction 4-CDP-2-C-methyl-D-erythritol 2-phosphate = 2-C-methyl-D-erythritol 2,4-cyclic diphosphate + CMP. It functions in the pathway isoprenoid biosynthesis; isopentenyl diphosphate biosynthesis via DXP pathway; isopentenyl diphosphate from 1-deoxy-D-xylulose 5-phosphate: step 4/6. In terms of biological role, involved in the biosynthesis of isopentenyl diphosphate (IPP) and dimethylallyl diphosphate (DMAPP), two major building blocks of isoprenoid compounds. Catalyzes the conversion of 4-diphosphocytidyl-2-C-methyl-D-erythritol 2-phosphate (CDP-ME2P) to 2-C-methyl-D-erythritol 2,4-cyclodiphosphate (ME-CPP) with a corresponding release of cytidine 5-monophosphate (CMP). This Haemophilus influenzae (strain PittEE) protein is 2-C-methyl-D-erythritol 2,4-cyclodiphosphate synthase.